Consider the following 456-residue polypeptide: NAD-dependent deacetylase sir2C (456 aa).

The Deacetylase sirtuin-type domain maps to 161 to 443 (IEIENNKIKE…LNLSKLLNWD (283 aa)). Catalysis depends on histidine 294, which acts as the Proton acceptor. 4 residues coordinate Zn(2+): cysteine 302, cysteine 305, cysteine 331, and cysteine 336.

The protein belongs to the sirtuin family. The cofactor is Zn(2+).

It catalyses the reaction N(6)-acetyl-L-lysyl-[protein] + NAD(+) + H2O = 2''-O-acetyl-ADP-D-ribose + nicotinamide + L-lysyl-[protein]. NAD-dependent deacetylase, which plays an important role in the regulation of transcriptional repression. The protein is NAD-dependent deacetylase sir2C (sir2C) of Dictyostelium discoideum (Social amoeba).